A 204-amino-acid chain; its full sequence is MIGKLSGKADSQGDDYVIIDVNGVGYLVYASGKTLDKLVEGEFYKLFIETHVREEHIHLYGFLTLEEKNFFNLLQSVNGIGTRMALSILSNLTPDDIQIAVNNEDKNIFKAISGVGAKLAERIVLELKDKVTKISSSSAIKDSLNIKNITPVTSNEVMKALINLGFSRFEAQNVVQGIITQNPKISIDELIKTALKNRNSKFFS.

The segment at 1-63 is domain I; the sequence is MIGKLSGKAD…EEHIHLYGFL (63 aa). The segment at 64–142 is domain II; it reads TLEEKNFFNL…KISSSSAIKD (79 aa). The segment at 143–153 is flexible linker; sequence SLNIKNITPVT. Residues 153 to 204 form a domain III region; that stretch reads TSNEVMKALINLGFSRFEAQNVVQGIITQNPKISIDELIKTALKNRNSKFFS.

This sequence belongs to the RuvA family. Homotetramer. Forms an RuvA(8)-RuvB(12)-Holliday junction (HJ) complex. HJ DNA is sandwiched between 2 RuvA tetramers; dsDNA enters through RuvA and exits via RuvB. An RuvB hexamer assembles on each DNA strand where it exits the tetramer. Each RuvB hexamer is contacted by two RuvA subunits (via domain III) on 2 adjacent RuvB subunits; this complex drives branch migration. In the full resolvosome a probable DNA-RuvA(4)-RuvB(12)-RuvC(2) complex forms which resolves the HJ.

It is found in the cytoplasm. The RuvA-RuvB-RuvC complex processes Holliday junction (HJ) DNA during genetic recombination and DNA repair, while the RuvA-RuvB complex plays an important role in the rescue of blocked DNA replication forks via replication fork reversal (RFR). RuvA specifically binds to HJ cruciform DNA, conferring on it an open structure. The RuvB hexamer acts as an ATP-dependent pump, pulling dsDNA into and through the RuvAB complex. HJ branch migration allows RuvC to scan DNA until it finds its consensus sequence, where it cleaves and resolves the cruciform DNA. In Rickettsia canadensis (strain McKiel), this protein is Holliday junction branch migration complex subunit RuvA.